The following is a 217-amino-acid chain: Urease accessory protein UreF (217 aa).

This sequence belongs to the UreF family. UreD, UreF and UreG form a complex that acts as a GTP-hydrolysis-dependent molecular chaperone, activating the urease apoprotein by helping to assemble the nickel containing metallocenter of UreC. The UreE protein probably delivers the nickel.

The protein resides in the cytoplasm. In terms of biological role, required for maturation of urease via the functional incorporation of the urease nickel metallocenter. This Ruegeria pomeroyi (strain ATCC 700808 / DSM 15171 / DSS-3) (Silicibacter pomeroyi) protein is Urease accessory protein UreF.